The following is a 383-amino-acid chain: Acetylornithine deacetylase (383 aa).

A Zn(2+)-binding site is contributed by H80. D82 is an active-site residue. Residue D112 participates in Zn(2+) binding. Residue E144 is part of the active site. Positions 145, 169, and 355 each coordinate Zn(2+).

It belongs to the peptidase M20A family. ArgE subfamily. In terms of assembly, homodimer. Zn(2+) is required as a cofactor. Requires Co(2+) as cofactor. Glutathione serves as cofactor.

The protein resides in the cytoplasm. It catalyses the reaction N(2)-acetyl-L-ornithine + H2O = L-ornithine + acetate. Its pathway is amino-acid biosynthesis; L-arginine biosynthesis; L-ornithine from N(2)-acetyl-L-ornithine (linear): step 1/1. Its function is as follows. Catalyzes the hydrolysis of the amide bond of N(2)-acetylated L-amino acids. Cleaves the acetyl group from N-acetyl-L-ornithine to form L-ornithine, an intermediate in L-arginine biosynthesis pathway, and a branchpoint in the synthesis of polyamines. The polypeptide is Acetylornithine deacetylase (Escherichia coli O45:K1 (strain S88 / ExPEC)).